We begin with the raw amino-acid sequence, 226 residues long: Small ribosomal subunit protein uS3 (226 aa).

Residues 39–107 (IRAYIKKNVV…EVTLNIKEVK (69 aa)) enclose the KH type-2 domain.

The protein belongs to the universal ribosomal protein uS3 family. Part of the 30S ribosomal subunit. Forms a tight complex with proteins S10 and S14.

In terms of biological role, binds the lower part of the 30S subunit head. Binds mRNA in the 70S ribosome, positioning it for translation. The chain is Small ribosomal subunit protein uS3 from Pelagibacter ubique (strain HTCC1062).